The following is a 345-amino-acid chain: Calcium uniporter regulatory subunit MCUb, mitochondrial (345 aa).

Residues 1-44 (MPGALSGRRMLPSGLCLGRWQLLRTIRARGRGDPRELPSTPQVL) constitute a mitochondrion transit peptide. Positions 188–221 (EIQKRRERHLMAKIDHLQEQLRPLEQVKAAIEAR) form a coiled coil. Helical transmembrane passes span 229-249 (LLWA…WLTW) and 259-279 (PVTF…FIIT). The stretch at 306 to 334 (FDVEQYNKLKEDLAEATESLESVRRSLRL) forms a coiled coil.

The protein belongs to the MCU (TC 1.A.77) family. Homooligomer. Associates with the uniplex complex, composed of MCU, MICU1, MICU2 and EMRE/SMDT1, inhibiting its activity. As to expression, detected in lung, brain and heart, and at lower levels in white fat, skeletal muscle and spleen. Detected at very low levels in kidney and liver. Highly expressed in macrophages during the progression of skeletal muscle regeneration.

It localises to the mitochondrion inner membrane. Its function is as follows. Negative regulator of the mitochondrial calcium uniporter (MCU), a channel that mediates calcium uptake into the mitochondrial matrix. MCUB is required to limit mitochondrial calcium overload during stress. Acts as a dominant-negative regulator that displaces MCU from the functional uniplex complex and thereby decreases the association of calcium sensors MICU1 and MICU2, preventing channel gating. Mitochondrial calcium homeostasis plays key roles in mitochondrial metabolism. Acts as an important regulator of mitochondrial metabolism in response to stress in muscle cells: induced in response to fasting, leading to restrict mitochondrial calcium uptake, resulting in reprogramming of mitochondria toward fatty acid oxidation preference. Acts as a regulator of macrophage polarization during skeletal muscle regeneration: inhibition of mitochondrial calcium uptake drives differentiation of macrophages with anti-inflammatory profile, promoting the differentiation and fusion of satellite cells. The sequence is that of Calcium uniporter regulatory subunit MCUb, mitochondrial from Mus musculus (Mouse).